The chain runs to 300 residues: Ribonuclease HIII (300 aa).

The RNase H type-2 domain maps to 86–300; sequence RPRLGVDESG…FYEICDSTDI (215 aa). Residues D92, E93, and D196 each contribute to the a divalent metal cation site.

This sequence belongs to the RNase HII family. RnhC subfamily. Mn(2+) is required as a cofactor. It depends on Mg(2+) as a cofactor.

Its subcellular location is the cytoplasm. The catalysed reaction is Endonucleolytic cleavage to 5'-phosphomonoester.. Endonuclease that specifically degrades the RNA of RNA-DNA hybrids. This is Ribonuclease HIII from Chlamydia abortus (strain DSM 27085 / S26/3) (Chlamydophila abortus).